We begin with the raw amino-acid sequence, 370 residues long: MAFAKLSAFVLALGATVALGESPTHRCLNKRVTCATGQTTANEACCALFPILDDIQTNLFDGAQCGEEVHESLRLTFHDAIAFSPALTNAGQFGGGGADGSMIIFSDTEPNFHANLGIDEIVEAQKPFIARHNISAADFIQFAGAIGVSNCAGAPRLNFFLGRPDATQIPPDGLVPEPFDDVTKILSRMGDAGFSTVEVVWLLASHTIAAADHVDPSIPGTPFDSTPSTFDSQFFLETMLQGTAFPGTPGNQGEVESPLAGEMRLQSDFLLARDSRSACEWQSMVNNMPKIQNRFTQVMKKLSLLGHNQADLIDCSDVIPVPKTLTKAATFPAGKSQADVEIVCNAAATPFPALASDPGPVTAVPPVPPS.

An N-terminal signal peptide occupies residues 1–20 (MAFAKLSAFVLALGATVALG). Residues 21–31 (ESPTHRCLNKR) constitute a propeptide that is removed on maturation. Cystine bridges form between cysteine 34/cysteine 46, cysteine 45/cysteine 315, cysteine 65/cysteine 151, and cysteine 279/cysteine 344. 2 residues coordinate Mn(2+): glutamate 67 and glutamate 71. Histidine 78 (proton acceptor) is an active-site residue. 4 residues coordinate Ca(2+): aspartate 79, glycine 97, aspartate 99, and serine 101. N-linked (GlcNAc...) asparagine glycosylation occurs at asparagine 133. Tryptophan 201 serves as the catalytic Tryptophan radical intermediate. A heme b-binding site is contributed by histidine 206. Residue threonine 207 coordinates Ca(2+). 210-214 (AADHV) is a heme b binding site. Residue aspartate 212 participates in Mn(2+) binding. Aspartate 224, threonine 226, threonine 229, and aspartate 231 together coordinate Ca(2+).

It belongs to the peroxidase family. Ligninase subfamily. It depends on heme b as a cofactor. Ca(2+) is required as a cofactor.

It is found in the secreted. It carries out the reaction 1-(4-hydroxy-3-methoxyphenyl)-2-(2-methoxyphenoxy)propane-1,3-diol + H2O2 = guaiacol + vanillin + glycolaldehyde + H2O. The catalysed reaction is 2 Mn(2+) + H2O2 + 2 H(+) = 2 Mn(3+) + 2 H2O. In terms of biological role, a versatile ligninolytic peroxidase that combines the substrate specificity characteristics of the two other ligninolytic peroxidases, manganese peroxidase and lignin peroxidase. This Pleurotus eryngii (Boletus of the steppes) protein is Versatile peroxidase VPS1 (vps1).